The primary structure comprises 325 residues: Putative carboxypeptidase YocD (325 aa).

The active-site Nucleophile is serine 111. Residues glutamate 228 and histidine 296 each act as charge relay system in the active site.

It belongs to the peptidase S66 family.

The chain is Putative carboxypeptidase YocD (yocD) from Bacillus subtilis (strain 168).